Reading from the N-terminus, the 126-residue chain is UPF0102 protein Mlg_2205 (126 aa).

Belongs to the UPF0102 family.

In Alkalilimnicola ehrlichii (strain ATCC BAA-1101 / DSM 17681 / MLHE-1), this protein is UPF0102 protein Mlg_2205.